The sequence spans 121 residues: Small ribosomal subunit protein uS13 (121 aa).

A disordered region spans residues 97 to 121 (VRGQRTRTNARTRRGARKTVAGKKK). Over residues 100–121 (QRTRTNARTRRGARKTVAGKKK) the composition is skewed to basic residues.

It belongs to the universal ribosomal protein uS13 family. Part of the 30S ribosomal subunit. Forms a loose heterodimer with protein S19. Forms two bridges to the 50S subunit in the 70S ribosome.

In terms of biological role, located at the top of the head of the 30S subunit, it contacts several helices of the 16S rRNA. In the 70S ribosome it contacts the 23S rRNA (bridge B1a) and protein L5 of the 50S subunit (bridge B1b), connecting the 2 subunits; these bridges are implicated in subunit movement. Contacts the tRNAs in the A and P-sites. The polypeptide is Small ribosomal subunit protein uS13 (Prochlorococcus marinus (strain MIT 9313)).